We begin with the raw amino-acid sequence, 270 residues long: Regulatory protein RecX (270 aa).

It belongs to the RecX family.

Its subcellular location is the cytoplasm. Functionally, modulates RecA activity. The sequence is that of Regulatory protein RecX from Bacillus anthracis (strain A0248).